We begin with the raw amino-acid sequence, 242 residues long: Large ribosomal subunit protein uL30x (242 aa).

Belongs to the universal ribosomal protein uL30 family.

The polypeptide is Large ribosomal subunit protein uL30x (RPL7C) (Arabidopsis thaliana (Mouse-ear cress)).